A 367-amino-acid chain; its full sequence is Glutamate 5-kinase (367 aa).

An ATP-binding site is contributed by Lys-8. Ser-49, Asp-136, and Asn-148 together coordinate substrate. ATP is bound by residues 168–169 (TD) and 210–216 (TGGMATK). The PUA domain occupies 275-353 (TGKLYLDRGA…EEIPTILGYS (79 aa)).

Belongs to the glutamate 5-kinase family.

The protein localises to the cytoplasm. The enzyme catalyses L-glutamate + ATP = L-glutamyl 5-phosphate + ADP. It functions in the pathway amino-acid biosynthesis; L-proline biosynthesis; L-glutamate 5-semialdehyde from L-glutamate: step 1/2. Functionally, catalyzes the transfer of a phosphate group to glutamate to form L-glutamate 5-phosphate. The sequence is that of Glutamate 5-kinase from Cyanothece sp. (strain PCC 7425 / ATCC 29141).